The primary structure comprises 388 residues: Chorismate synthase (388 aa).

2 residues coordinate NADP(+): Arg39 and Arg45. Residues 132–134 (RSS), 251–252 (NA), Gly296, 311–315 (KPIPT), and Arg337 each bind FMN.

The protein belongs to the chorismate synthase family. In terms of assembly, homotetramer. The cofactor is FMNH2.

It catalyses the reaction 5-O-(1-carboxyvinyl)-3-phosphoshikimate = chorismate + phosphate. It functions in the pathway metabolic intermediate biosynthesis; chorismate biosynthesis; chorismate from D-erythrose 4-phosphate and phosphoenolpyruvate: step 7/7. Functionally, catalyzes the anti-1,4-elimination of the C-3 phosphate and the C-6 proR hydrogen from 5-enolpyruvylshikimate-3-phosphate (EPSP) to yield chorismate, which is the branch point compound that serves as the starting substrate for the three terminal pathways of aromatic amino acid biosynthesis. This reaction introduces a second double bond into the aromatic ring system. In Staphylococcus haemolyticus (strain JCSC1435), this protein is Chorismate synthase.